The sequence spans 358 residues: Cytoplasmic tRNA 2-thiolation protein 1 (358 aa).

The protein belongs to the TtcA family. CTU1/NCS6/ATPBD3 subfamily.

It localises to the cytoplasm. It participates in tRNA modification; 5-methoxycarbonylmethyl-2-thiouridine-tRNA biosynthesis. In terms of biological role, plays a central role in 2-thiolation of mcm(5)S(2)U at tRNA wobble positions of tRNA(Lys), tRNA(Glu) and tRNA(Gln). Directly binds tRNAs and probably acts by catalyzing adenylation of tRNAs, an intermediate required for 2-thiolation. It is unclear whether it acts as a sulfurtransferase that transfers sulfur from thiocarboxylated URM1 onto the uridine of tRNAs at wobble position. Prior mcm(5) tRNA modification by the elongator complex is required for 2-thiolation. May also be involved in protein urmylation. The protein is Cytoplasmic tRNA 2-thiolation protein 1 of Candida glabrata (strain ATCC 2001 / BCRC 20586 / JCM 3761 / NBRC 0622 / NRRL Y-65 / CBS 138) (Yeast).